Reading from the N-terminus, the 208-residue chain is Uracil phosphoribosyltransferase (208 aa).

5-phospho-alpha-D-ribose 1-diphosphate is bound by residues R78, R103, and 130 to 138 (DPMFATGGT). Uracil is bound by residues I193 and 198–200 (GDA). Position 199 (D199) interacts with 5-phospho-alpha-D-ribose 1-diphosphate.

It belongs to the UPRTase family. It depends on Mg(2+) as a cofactor.

The catalysed reaction is UMP + diphosphate = 5-phospho-alpha-D-ribose 1-diphosphate + uracil. The protein operates within pyrimidine metabolism; UMP biosynthesis via salvage pathway; UMP from uracil: step 1/1. Its activity is regulated as follows. Allosterically activated by GTP. In terms of biological role, catalyzes the conversion of uracil and 5-phospho-alpha-D-ribose 1-diphosphate (PRPP) to UMP and diphosphate. This chain is Uracil phosphoribosyltransferase, found in Campylobacter jejuni (strain RM1221).